The chain runs to 348 residues: Dihydroorotase (348 aa).

Residues H14 and H16 each coordinate Zn(2+). Substrate-binding positions include 16 to 18 (HLR) and N42. 3 residues coordinate Zn(2+): K100, H137, and H175. N6-carboxylysine is present on K100. H137 provides a ligand contact to substrate. L220 is a binding site for substrate. D248 contributes to the Zn(2+) binding site. D248 is an active-site residue. H252 and A264 together coordinate substrate.

This sequence belongs to the metallo-dependent hydrolases superfamily. DHOase family. Class II DHOase subfamily. As to quaternary structure, homodimer. Zn(2+) serves as cofactor.

The catalysed reaction is (S)-dihydroorotate + H2O = N-carbamoyl-L-aspartate + H(+). It functions in the pathway pyrimidine metabolism; UMP biosynthesis via de novo pathway; (S)-dihydroorotate from bicarbonate: step 3/3. In terms of biological role, catalyzes the reversible cyclization of carbamoyl aspartate to dihydroorotate. The sequence is that of Dihydroorotase from Pseudomonas fluorescens (strain ATCC BAA-477 / NRRL B-23932 / Pf-5).